A 254-amino-acid polypeptide reads, in one-letter code: uncharacterized protein (254 aa).

Positions 6-239 (LSVDGVEFAY…NIKAVYGVDA (234 aa)) constitute an ABC transporter domain. 38–45 (GVNGAGKS) contributes to the ATP binding site.

This sequence belongs to the ABC transporter superfamily.

This is an uncharacterized protein from Methanocaldococcus jannaschii (strain ATCC 43067 / DSM 2661 / JAL-1 / JCM 10045 / NBRC 100440) (Methanococcus jannaschii).